A 422-amino-acid chain; its full sequence is G2/mitotic-specific cyclin-A (422 aa).

The tract at residues 1 to 29 (MSQPFALHHDGENQMQRRGKMNTRSNGLS) is disordered.

Belongs to the cyclin family. Cyclin AB subfamily.

Functionally, essential for the control of the cell cycle at the G2/M (mitosis) transition. Interacts with the CDC2 and CDK2 protein kinases to form MPF. G2/M cyclins accumulate steadily during G2 and are abruptly destroyed at mitosis. In Spisula solidissima (Atlantic surf-clam), this protein is G2/mitotic-specific cyclin-A.